Here is an 874-residue protein sequence, read N- to C-terminus: Leucine--tRNA ligase (874 aa).

A 'HIGH' region motif is present at residues 43-53; the sequence is PYPSGRIHIGH. A 'KMSKS' region motif is present at residues 630-634; the sequence is KMSKS. K633 contacts ATP.

Belongs to the class-I aminoacyl-tRNA synthetase family.

It localises to the cytoplasm. The catalysed reaction is tRNA(Leu) + L-leucine + ATP = L-leucyl-tRNA(Leu) + AMP + diphosphate. The polypeptide is Leucine--tRNA ligase (Bradyrhizobium diazoefficiens (strain JCM 10833 / BCRC 13528 / IAM 13628 / NBRC 14792 / USDA 110)).